We begin with the raw amino-acid sequence, 307 residues long: N-acetylmuramic acid 6-phosphate etherase (307 aa).

The SIS domain maps to 59–222; the sequence is TTKALSQGGK…STGVMVRLGK (164 aa). The Proton donor role is filled by E87. Residue E118 is part of the active site.

Belongs to the GCKR-like family. MurNAc-6-P etherase subfamily. Homodimer.

The catalysed reaction is N-acetyl-D-muramate 6-phosphate + H2O = N-acetyl-D-glucosamine 6-phosphate + (R)-lactate. Its pathway is amino-sugar metabolism; N-acetylmuramate degradation. Functionally, specifically catalyzes the cleavage of the D-lactyl ether substituent of MurNAc 6-phosphate, producing GlcNAc 6-phosphate and D-lactate. The protein is N-acetylmuramic acid 6-phosphate etherase of Trichodesmium erythraeum (strain IMS101).